The following is a 79-amino-acid chain: Apolipoprotein C-II (79 aa).

The N-terminal stretch at 1–21 (MDLKVVAVSFLLLVLCSEAAG) is a signal peptide. The lipid binding stretch occupies residues 45–52 (GVEKLRDI). A lipoprotein lipase cofactor region spans residues 56-79 (SVDAVGTYTSILTDQLYHWWCGEQ).

It belongs to the apolipoprotein C2 family. Post-translationally, proapolipoprotein C-II is synthesized as a sialic acid containing glycoprotein which is subsequently desialylated prior to its proteolytic processing. Proapolipoprotein C-II, the major form found in plasma undergoes proteolytic cleavage of its N-terminal hexapeptide to generate apolipoprotein C-II, which occurs as the minor form in plasma.

The protein localises to the secreted. In terms of biological role, component of chylomicrons, very low-density lipoproteins (VLDL), low-density lipoproteins (LDL), and high-density lipoproteins (HDL) in plasma. Plays an important role in lipoprotein metabolism as an activator of lipoprotein lipase. Both proapolipoprotein C-II and apolipoprotein C-II can activate lipoprotein lipase. In Alligator mississippiensis (American alligator), this protein is Apolipoprotein C-II (APOC2).